Reading from the N-terminus, the 132-residue chain is tRNA (cytidine(56)-2'-O)-methyltransferase (132 aa).

S-adenosyl-L-methionine is bound by residues Leu35, 65–69, and 83–90; these read GSEKV and IGNQPHSE.

The protein belongs to the aTrm56 family. As to quaternary structure, homodimer.

It is found in the cytoplasm. It catalyses the reaction cytidine(56) in tRNA + S-adenosyl-L-methionine = 2'-O-methylcytidine(56) in tRNA + S-adenosyl-L-homocysteine + H(+). Specifically catalyzes the AdoMet-dependent 2'-O-ribose methylation of cytidine at position 56 in tRNAs. In Sulfolobus acidocaldarius (strain ATCC 33909 / DSM 639 / JCM 8929 / NBRC 15157 / NCIMB 11770), this protein is tRNA (cytidine(56)-2'-O)-methyltransferase.